We begin with the raw amino-acid sequence, 422 residues long: Testin (422 aa).

The region spanning 92–199 (MILTSPVAAK…GDVKLPKEVE (108 aa)) is the PET domain. The interval 135-165 (QPVAGSEGAQYRKKQLAKQLPAHDQDPSKCH) is disordered. The segment covering 155-165 (PAHDQDPSKCH) has biased composition (basic and acidic residues). LIM zinc-binding domains lie at 234–299 (YYCF…SEKP), 300–359 (RCAG…NHAV), and 360–422 (SCQG…KMSS).

The protein belongs to the prickle / espinas / testin family.

The protein localises to the cytoplasm. It is found in the cell cortex. The protein resides in the cell junction. It localises to the focal adhesion. Scaffold protein that may play a role in cell adhesion, cell spreading and in the reorganization of the actin cytoskeleton. May inhibit cell growth. Regulates cranial neural crest migration. Acts together with prickle1 to control axial elongation. The sequence is that of Testin from Xenopus tropicalis (Western clawed frog).